The sequence spans 308 residues: tRNA dimethylallyltransferase (308 aa).

Residue 19-26 (GPTASGKS) coordinates ATP. 21–26 (TASGKS) contacts substrate. The interaction with substrate tRNA stretch occupies residues 44–47 (DSMQ).

Belongs to the IPP transferase family. As to quaternary structure, monomer. Requires Mg(2+) as cofactor.

It catalyses the reaction adenosine(37) in tRNA + dimethylallyl diphosphate = N(6)-dimethylallyladenosine(37) in tRNA + diphosphate. Its function is as follows. Catalyzes the transfer of a dimethylallyl group onto the adenine at position 37 in tRNAs that read codons beginning with uridine, leading to the formation of N6-(dimethylallyl)adenosine (i(6)A). This Methylobacterium radiotolerans (strain ATCC 27329 / DSM 1819 / JCM 2831 / NBRC 15690 / NCIMB 10815 / 0-1) protein is tRNA dimethylallyltransferase.